The following is a 635-amino-acid chain: Extracellular metalloproteinase MEP (635 aa).

The N-terminal stretch at 1–19 (MRYSLSLALLGVAAVTVVA) is a signal peptide. A propeptide spanning residues 20–242 (HPHTPGRHGV…VHGVVDYVSH (223 aa)) is cleaved from the precursor. H428 is a Zn(2+) binding site. E429 is an active-site residue. H432 provides a ligand contact to Zn(2+). N-linked (GlcNAc...) asparagine glycosylation occurs at N473.

This sequence belongs to the peptidase M36 family. The cofactor is Zn(2+).

It is found in the secreted. Its function is as follows. Secreted metalloproteinase that allows assimilation of proteinaceous substrates. In Pyricularia oryzae (strain 70-15 / ATCC MYA-4617 / FGSC 8958) (Rice blast fungus), this protein is Extracellular metalloproteinase MEP (MEP).